Reading from the N-terminus, the 176-residue chain is uncharacterized protein (176 aa).

Positions 1–20 are cleaved as a signal peptide; it reads MIKKISIILITLFIIQLTKS. Residues 26–46 form a disordered region; the sequence is NNNNNNNNNNNNNNNNNNNNN. N-linked (GlcNAc...) asparagine glycosylation is present at N120.

Belongs to the Dictyostelium gerABC family.

Its subcellular location is the secreted. This is an uncharacterized protein from Dictyostelium discoideum (Social amoeba).